The sequence spans 338 residues: Glyceraldehyde-3-phosphate dehydrogenase (338 aa).

NAD(+) is bound by residues 11 to 12 (TI) and Gly-109. 138-140 (SCN) contributes to the D-glyceraldehyde 3-phosphate binding site. The active-site Nucleophile is the Cys-139. Residue Arg-167 participates in NAD(+) binding. D-glyceraldehyde 3-phosphate contacts are provided by residues Thr-169 and 192-193 (HA). Gln-299 is an NAD(+) binding site.

Belongs to the glyceraldehyde-3-phosphate dehydrogenase family. Homotetramer.

The protein resides in the cytoplasm. It catalyses the reaction D-glyceraldehyde 3-phosphate + phosphate + NADP(+) = (2R)-3-phospho-glyceroyl phosphate + NADPH + H(+). The catalysed reaction is D-glyceraldehyde 3-phosphate + phosphate + NAD(+) = (2R)-3-phospho-glyceroyl phosphate + NADH + H(+). It functions in the pathway carbohydrate degradation; glycolysis; pyruvate from D-glyceraldehyde 3-phosphate: step 1/5. This Thermoplasma volcanium (strain ATCC 51530 / DSM 4299 / JCM 9571 / NBRC 15438 / GSS1) protein is Glyceraldehyde-3-phosphate dehydrogenase.